Consider the following 184-residue polypeptide: UPF0397 protein SAOUHSC_03020 (184 aa).

The next 5 membrane-spanning stretches (helical) occupy residues 11-31, 44-64, 77-97, 116-136, and 148-168; these read VVAIGIGAAVFVILGRFVVIP, AFLALISAIFGPFAGLMTGLV, AWWSWVICSGIIGCLYGWIGL, IGQIIANIICWALIAPTLDIL, and QGVISAVLNIISVGIIGTILL.

This sequence belongs to the UPF0397 family.

The protein localises to the cell membrane. In Staphylococcus aureus (strain NCTC 8325 / PS 47), this protein is UPF0397 protein SAOUHSC_03020.